A 339-amino-acid chain; its full sequence is Glyceraldehyde-3-phosphate dehydrogenase (339 aa).

NAD(+)-binding positions include 12–13, D39, R84, and S127; that span reads RI. Residues 157–159, T188, R203, 216–217, and R239 each bind D-glyceraldehyde 3-phosphate; these read SCT and TG. The active-site Nucleophile is C158. N320 contributes to the NAD(+) binding site.

This sequence belongs to the glyceraldehyde-3-phosphate dehydrogenase family. In terms of assembly, homotetramer.

Its subcellular location is the cytoplasm. It catalyses the reaction D-glyceraldehyde 3-phosphate + phosphate + NAD(+) = (2R)-3-phospho-glyceroyl phosphate + NADH + H(+). It participates in carbohydrate degradation; glycolysis; pyruvate from D-glyceraldehyde 3-phosphate: step 1/5. Functionally, catalyzes the oxidative phosphorylation of glyceraldehyde 3-phosphate (G3P) to 1,3-bisphosphoglycerate (BPG) using the cofactor NAD. The first reaction step involves the formation of a hemiacetal intermediate between G3P and a cysteine residue, and this hemiacetal intermediate is then oxidized to a thioester, with concomitant reduction of NAD to NADH. The reduced NADH is then exchanged with the second NAD, and the thioester is attacked by a nucleophilic inorganic phosphate to produce BPG. This chain is Glyceraldehyde-3-phosphate dehydrogenase (gapA), found in Mycobacterium avium.